We begin with the raw amino-acid sequence, 582 residues long: Semenogelin-2 (582 aa).

Positions 1 to 23 (MKSIILFVLSLLLILEKQAAVMG) are cleaved as a signal peptide. Disordered regions lie at residues 26-65 (CGSK…SFSI), 132-159 (GGQA…SSQY), 272-295 (NLNQ…RTEE), 318-358 (TEEK…ERHL), 379-417 (EEQI…EERR), and 439-582 (EEQI…PVST). Polar residues-rich tracts occupy residues 31-40 (QLPSGSSQFP) and 137-159 (RGTQ…SSQY). Residues 325–335 (KSQNQVTIHSQ) are compositionally biased toward polar residues. Positions 336–345 (GQEHGHKENK) are enriched in basic and acidic residues. Composition is skewed to polar residues over residues 379–397 (EEQI…SQAQ), 439–457 (EEQI…SQAQ), 487–496 (KDVSQSSTSF), and 506–524 (SQIQ…QNAK). Composition is skewed to basic and acidic residues over residues 525-552 (GKSD…ESSE) and 559-582 (TEHE…PVST).

It belongs to the semenogelin family. Interacts with SERPINA5.

The protein resides in the secreted. Functionally, participates in the formation of a gel matrix (sperm coagulum) entrapping the accessory gland secretions and ejaculated spermatozoa. This is Semenogelin-2 (SEMG2) from Hylobates lar (Lar gibbon).